Reading from the N-terminus, the 239-residue chain is tRNA (guanine-N(7)-)-methyltransferase (239 aa).

Positions 69, 94, 121, and 144 each coordinate S-adenosyl-L-methionine. D144 is an active-site residue. K148 contributes to the substrate binding site. Residues R150–R155 form an interaction with RNA region. Substrate-binding positions include D180 and T217–E220.

This sequence belongs to the class I-like SAM-binding methyltransferase superfamily. TrmB family. In terms of assembly, monomer.

The catalysed reaction is guanosine(46) in tRNA + S-adenosyl-L-methionine = N(7)-methylguanosine(46) in tRNA + S-adenosyl-L-homocysteine. It participates in tRNA modification; N(7)-methylguanine-tRNA biosynthesis. Catalyzes the formation of N(7)-methylguanine at position 46 (m7G46) in tRNA. In Yersinia pseudotuberculosis serotype O:1b (strain IP 31758), this protein is tRNA (guanine-N(7)-)-methyltransferase.